A 449-amino-acid polypeptide reads, in one-letter code: Glucose-6-phosphate isomerase (449 aa).

Glu-291 serves as the catalytic Proton donor. Catalysis depends on residues His-312 and Lys-426.

It belongs to the GPI family.

The protein localises to the cytoplasm. It carries out the reaction alpha-D-glucose 6-phosphate = beta-D-fructose 6-phosphate. It participates in carbohydrate biosynthesis; gluconeogenesis. It functions in the pathway carbohydrate degradation; glycolysis; D-glyceraldehyde 3-phosphate and glycerone phosphate from D-glucose: step 2/4. In terms of biological role, catalyzes the reversible isomerization of glucose-6-phosphate to fructose-6-phosphate. This chain is Glucose-6-phosphate isomerase, found in Streptococcus mutans serotype c (strain ATCC 700610 / UA159).